The following is a 436-amino-acid chain: 3-ketoacyl-CoA thiolase (436 aa).

The active-site Acyl-thioester intermediate is the Cys99. Catalysis depends on proton acceptor residues His392 and Cys422.

Belongs to the thiolase-like superfamily. Thiolase family. As to quaternary structure, heterotetramer of two alpha chains (FadJ) and two beta chains (FadI).

The protein localises to the cytoplasm. The enzyme catalyses an acyl-CoA + acetyl-CoA = a 3-oxoacyl-CoA + CoA. The protein operates within lipid metabolism; fatty acid beta-oxidation. Functionally, catalyzes the final step of fatty acid oxidation in which acetyl-CoA is released and the CoA ester of a fatty acid two carbons shorter is formed. In Citrobacter koseri (strain ATCC BAA-895 / CDC 4225-83 / SGSC4696), this protein is 3-ketoacyl-CoA thiolase.